We begin with the raw amino-acid sequence, 36 residues long: Gloverin (36 aa).

It is found in the secreted. Functionally, antibacterial protein. The polypeptide is Gloverin (Heliothis virescens (Tobacco budworm moth)).